The chain runs to 228 residues: Ribosomal RNA small subunit methyltransferase G (228 aa).

S-adenosyl-L-methionine contacts are provided by residues glycine 89, leucine 94, 140-141, and arginine 159; that span reads VE.

It belongs to the methyltransferase superfamily. RNA methyltransferase RsmG family.

The protein localises to the cytoplasm. The enzyme catalyses guanosine(527) in 16S rRNA + S-adenosyl-L-methionine = N(7)-methylguanosine(527) in 16S rRNA + S-adenosyl-L-homocysteine. Functionally, specifically methylates the N7 position of guanine in position 527 of 16S rRNA. This Burkholderia ambifaria (strain ATCC BAA-244 / DSM 16087 / CCUG 44356 / LMG 19182 / AMMD) (Burkholderia cepacia (strain AMMD)) protein is Ribosomal RNA small subunit methyltransferase G.